Here is a 34-residue protein sequence, read N- to C-terminus: Photosystem II reaction center protein Psb30 (34 aa).

The chain crosses the membrane as a helical span at residues 5–25 (VLAQLTVLAFVIAVGPITLIW).

Belongs to the Psb30/Ycf12 family. As to quaternary structure, PSII is composed of 1 copy each of membrane proteins PsbA, PsbB, PsbC, PsbD, PsbE, PsbF, PsbH, PsbI, PsbJ, PsbK, PsbL, PsbM, PsbT, PsbX, PsbY, PsbZ, Psb30/Ycf12, peripheral proteins of the oxygen-evolving complex and a large number of cofactors. It forms dimeric complexes.

The protein localises to the plastid. Its subcellular location is the chloroplast thylakoid membrane. A core subunit of photosystem II (PSII), probably helps stabilize the reaction center. This chain is Photosystem II reaction center protein Psb30, found in Cyanidioschyzon merolae (strain NIES-3377 / 10D) (Unicellular red alga).